We begin with the raw amino-acid sequence, 118 residues long: MMRRGEIWQVDLDPARGSEANNQRPAVVVSNDRANATATRLGRGVITVVPVTSNIAKVYPFQVLLSATTTGLQVDCKAQAEQIRSIATERLLRPIGRVSAAELAQLDEALKLHLDLWS.

It belongs to the PemK/MazF family. In terms of assembly, forms a complex with cognate antitoxin MazE9.

Its function is as follows. Toxic component of a type II toxin-antitoxin (TA) system. Upon expression in E.coli and M.smegmatis inhibits cell growth and colony formation. Its toxic effect is neutralized by coexpression with cognate antitoxin MazE9. Acts as an mRNA interferase, specifically cleaving between U and C in UAC sequences. May cleave its cognate antitoxin's gene. In E.coli expression with non-cognate antitoxins VapB27 and VapB40 partially neutralizes the toxin. The protein is Endoribonuclease MazF9 (mazF9) of Mycobacterium tuberculosis (strain ATCC 25618 / H37Rv).